The chain runs to 80 residues: Putative defensin-like protein 28 (80 aa).

The N-terminal stretch at 1 to 22 (MLRANVVVSLVIFAALMQCMNG) is a signal peptide.

It belongs to the DEFL family.

The protein localises to the secreted. The chain is Putative defensin-like protein 28 from Arabidopsis thaliana (Mouse-ear cress).